The following is a 309-amino-acid chain: Taste receptor type 2 member 46 (309 aa).

Residue Met1 is a topological domain, extracellular. The helical transmembrane segment at 2 to 22 threads the bilayer; it reads ITFLPIIFSILIVVTFVIGNF. Topologically, residues 23 to 46 are cytoplasmic; it reads ANGFIALVNSIEWFKRQKISFADQ. Residues 47 to 67 form a helical membrane-spanning segment; sequence ILTALAVSRVGLLWVLVLNWY. Residues 68 to 86 lie on the Extracellular side of the membrane; sequence ATELNPAFNSIEVRITAYN. Residues 87 to 107 traverse the membrane as a helical segment; it reads VWAVINHFSNWLATSLSIFYL. Topologically, residues 108-126 are cytoplasmic; sequence LKIANFSNLIFLHLKRRVK. A helical membrane pass occupies residues 127 to 147; sequence SVVLVILLGPLLFLVCHLFVI. The Extracellular segment spans residues 148 to 178; it reads NMNQIIWTKEYEGNMTWKIKLRSAMYLSNTT. Asn161 and Asn176 each carry an N-linked (GlcNAc...) asparagine glycan. A helical membrane pass occupies residues 179 to 199; that stretch reads VTILANLVPFTLTLISFLLLI. The Cytoplasmic portion of the chain corresponds to 200–229; that stretch reads CSLCKHLKKMQLHGKGSQDPSMKVHIKALQ. A helical membrane pass occupies residues 230 to 250; the sequence is TVTSFLLLCAIYFLSIIMSVW. The Extracellular segment spans residues 251–259; sequence SFESLENKP. Residues 260–280 form a helical membrane-spanning segment; that stretch reads VFMFCEAIAFSYPSTHPFILI. Over 281–309 the chain is Cytoplasmic; sequence WGNKKLKQTFLSVLWHVRYWVKGEKPSSS.

It belongs to the G-protein coupled receptor T2R family. In terms of tissue distribution, expressed in subsets of taste receptor cells of the tongue and exclusively in gustducin-positive cells. Expressed on ciliated airway epithelium.

Its subcellular location is the membrane. The protein resides in the cell projection. It is found in the cilium membrane. Functionally, receptor that may play a role in the perception of bitterness and is gustducin-linked. May play a role in sensing the chemical composition of the gastrointestinal content. The activity of this receptor may stimulate alpha gustducin, mediate PLC-beta-2 activation and lead to the gating of TRPM5. In airway epithelial cells, binding of bitter compounds increases the intracellular calcium ion concentration and stimulates ciliary beat frequency. The sequence is that of Taste receptor type 2 member 46 (TAS2R46) from Homo sapiens (Human).